A 120-amino-acid polypeptide reads, in one-letter code: UPF0102 protein TW312 (120 aa).

This sequence belongs to the UPF0102 family.

This Tropheryma whipplei (strain TW08/27) (Whipple's bacillus) protein is UPF0102 protein TW312.